Here is a 187-residue protein sequence, read N- to C-terminus: Phosphatidylethanolamine-binding protein 1 (187 aa).

Residues serine 6 and serine 13 each carry the phosphoserine modification. Threonine 42 carries the post-translational modification Phosphothreonine. Serine 52, serine 54, serine 98, and serine 153 each carry phosphoserine. The segment at 93-134 is interaction with RAF1; sequence KGNDISSGTVLSDYVGSGPPKGTGLHRYVWLVYEQDRPLKCD.

It belongs to the phosphatidylethanolamine-binding protein family. As to quaternary structure, has a tendency to form dimers by disulfide cross-linking. Interacts with RAF1 and this interaction is enhanced if RAF1 is phosphorylated on residues 'Ser-338', 'Ser-339', 'Tyr-340' and 'Tyr-341'. Interacts with ALOX15; in response to IL13/interleukin-13, prevents the interaction of PEBP1 with RAF1 to activate the ERK signaling cascade.

The protein localises to the cytoplasm. In terms of biological role, binds ATP, opioids and phosphatidylethanolamine. Has lower affinity for phosphatidylinositol and phosphatidylcholine. Serine protease inhibitor which inhibits thrombin, neuropsin and chymotrypsin but not trypsin, tissue type plasminogen activator and elastase. Inhibits the kinase activity of RAF1 by inhibiting its activation and by dissociating the RAF1/MEK complex and acting as a competitive inhibitor of MEK phosphorylation. HCNP may be involved in the function of the presynaptic cholinergic neurons of the central nervous system. HCNP increases the production of choline acetyltransferase but not acetylcholinesterase. Seems to be mediated by a specific receptor. The sequence is that of Phosphatidylethanolamine-binding protein 1 (PEBP1) from Pongo abelii (Sumatran orangutan).